The following is a 338-amino-acid chain: Large ribosomal subunit protein uL10 (338 aa).

The span at 309–327 shows a compositional bias: basic and acidic residues; it reads KAEVEEAKEEEKEEKKEEA. Residues 309–338 form a disordered region; the sequence is KAEVEEAKEEEKEEKKEEAAPAAAGLGLLF.

The protein belongs to the universal ribosomal protein uL10 family. As to quaternary structure, part of the 50S ribosomal subunit. Forms part of the ribosomal stalk which helps the ribosome interact with GTP-bound translation factors. Forms a heptameric L10(L12)2(L12)2(L12)2 complex, where L10 forms an elongated spine to which the L12 dimers bind in a sequential fashion.

Forms part of the ribosomal stalk, playing a central role in the interaction of the ribosome with GTP-bound translation factors. The polypeptide is Large ribosomal subunit protein uL10 (Methanothermococcus thermolithotrophicus (Methanococcus thermolithotrophicus)).